Reading from the N-terminus, the 725-residue chain is MSASDLTSVQAGAPQGRRQILVTSALPYANGQIHIGHLVEYIQTDIWVRTMRMHGHEIYYIGADDTHGTPVMLRAEQEGVSPKQLIERVWREHKRDFDSFGVSFDNFYTTDSDENRVLSETIYLALKEAGFIAEREIEQAYDPVRQMFLPDRFIKGECPKCHAKDQYGDSCEVCGTTYQPTDLIHPYSVVSGAAPVRKTSTHYFFRLSDPRCEAFLREWVSGLAQPEATNKMREWLGEAGEAKLADWDISRDAPYFGFEIPGAPGKYFYVWLDAPVGYYASFKNLCQRRGLDFDAWIRKDSTTEQYHFIGKDILYFHTLFWPAMLEFSGHRTPTNVFAHGFLTVDGAKMSKSRGTFITAQSYIDTGLNPEWLRYYFAAKLNATMEDIDLNLEDFQARVNSDLVGKYVNIASRAAGFLLKRFDGRVQASAMNHPLLATLRGAIPQIAAHYEAREYGRALRQTMELADAVNGYVDSAKPWELAKDPANAVALHETCSVSLEAFRLLSLALKPVLPRVAQGVEAFLGIAPLTWADAGTPLSPEQPVRAYQHLMTRVDPKQIDALLAANRGSLQGTAAAAEAGAANGNGAGSKNGKGAKAAAQPAASAANADDGASPIISIDDFAKIDLRIAKIVACQAVEGSDKLLQLTLDVGEERTRNVFSGIKSAYRPEQLVGKLTVMVANLAPRKMKFGLSEGMVLAASAADEKAEPGLYILEPHSGAKPGMRVK.

The 'HIGH' region motif lies at 27–37 (PYANGQIHIGH). 4 residues coordinate Zn(2+): Cys158, Cys161, Cys171, and Cys174. Residues 348-352 (KMSKS) carry the 'KMSKS' region motif. An ATP-binding site is contributed by Lys351. The region spanning 619-725 (DFAKIDLRIA…SGAKPGMRVK (107 aa)) is the tRNA-binding domain.

The protein belongs to the class-I aminoacyl-tRNA synthetase family. MetG type 1 subfamily. As to quaternary structure, homodimer. Zn(2+) serves as cofactor.

The protein resides in the cytoplasm. The catalysed reaction is tRNA(Met) + L-methionine + ATP = L-methionyl-tRNA(Met) + AMP + diphosphate. In terms of biological role, is required not only for elongation of protein synthesis but also for the initiation of all mRNA translation through initiator tRNA(fMet) aminoacylation. The chain is Methionine--tRNA ligase from Burkholderia mallei (strain NCTC 10247).